The chain runs to 361 residues: Chorismate synthase (361 aa).

NADP(+) is bound at residue R47. FMN is bound by residues 124 to 126 (RAS), G286, 301 to 305 (KPTAT), and R327.

It belongs to the chorismate synthase family. As to quaternary structure, homotetramer. It depends on FMNH2 as a cofactor.

The enzyme catalyses 5-O-(1-carboxyvinyl)-3-phosphoshikimate = chorismate + phosphate. It participates in metabolic intermediate biosynthesis; chorismate biosynthesis; chorismate from D-erythrose 4-phosphate and phosphoenolpyruvate: step 7/7. Its function is as follows. Catalyzes the anti-1,4-elimination of the C-3 phosphate and the C-6 proR hydrogen from 5-enolpyruvylshikimate-3-phosphate (EPSP) to yield chorismate, which is the branch point compound that serves as the starting substrate for the three terminal pathways of aromatic amino acid biosynthesis. This reaction introduces a second double bond into the aromatic ring system. The sequence is that of Chorismate synthase from Akkermansia muciniphila (strain ATCC BAA-835 / DSM 22959 / JCM 33894 / BCRC 81048 / CCUG 64013 / CIP 107961 / Muc).